The primary structure comprises 155 residues: MAQFGGEKYGGRHTDEYGNPIQQGAGAHRGGGIMGGGQQAGQHGTTGVLGHGTAGQHGTTGGGLGHGTAGTGGALGGQHRRSGSSSSSSSSESDGEGGRRKKGMKDKMKEKLPGGHGTTTDQQQYGTAATHGQAQQHEKKGIMDKIKEKLPGGQH.

The segment at 1–155 is disordered; it reads MAQFGGEKYG…IKEKLPGGQH (155 aa). 2 stretches are compositionally biased toward gly residues: residues 27–39 and 47–76; these read AHRGGGIMGGGQQ and GVLGHGTAGQHGTTGGGLGHGTAGTGGALG. Over residues 83-92 the composition is skewed to low complexity; sequence GSSSSSSSSE. The span at 118–135 shows a compositional bias: polar residues; it reads TTTDQQQYGTAATHGQAQ. The segment covering 136–155 has biased composition (basic and acidic residues); it reads QHEKKGIMDKIKEKLPGGQH.

The protein belongs to the plant dehydrin family.

This chain is Desiccation-related protein clone PCC6-19, found in Craterostigma plantagineum (Blue gem).